We begin with the raw amino-acid sequence, 300 residues long: Glucose and ribitol dehydrogenase homolog (300 aa).

Positions 1–14 (MASQQFPPQNQETQ) are enriched in polar residues. Residues 1–23 (MASQQFPPQNQETQPGKEHAMDP) form a disordered region. 44–68 (IVTGGDSGIGRAVCLCFALEGATVA) contacts NAD(+). A substrate-binding site is contributed by serine 192. Catalysis depends on tyrosine 205, which acts as the Proton acceptor.

The protein belongs to the short-chain dehydrogenases/reductases (SDR) family.

In terms of biological role, may act as a short alcohol-polyol-sugar dehydrogenase possibly related to carbohydrate metabolism and the acquisition of desiccation tolerance. May also be involved in signal transduction. This is Glucose and ribitol dehydrogenase homolog from Oryza sativa subsp. japonica (Rice).